A 275-amino-acid chain; its full sequence is Large ribosomal subunit protein uL2 (275 aa).

The disordered stretch occupies residues 222–275 (GKVMNPVDHPHGGGEGRNPIGRNPSTPWGKLAMGVKTRGNKKSDRLIVKRRNKK).

This sequence belongs to the universal ribosomal protein uL2 family. Part of the 50S ribosomal subunit. Forms a bridge to the 30S subunit in the 70S ribosome.

In terms of biological role, one of the primary rRNA binding proteins. Required for association of the 30S and 50S subunits to form the 70S ribosome, for tRNA binding and peptide bond formation. It has been suggested to have peptidyltransferase activity; this is somewhat controversial. Makes several contacts with the 16S rRNA in the 70S ribosome. The polypeptide is Large ribosomal subunit protein uL2 (Desulforamulus reducens (strain ATCC BAA-1160 / DSM 100696 / MI-1) (Desulfotomaculum reducens)).